We begin with the raw amino-acid sequence, 388 residues long: Processive diacylglycerol beta-glucosyltransferase (388 aa).

The protein belongs to the glycosyltransferase 28 family. UgtP subfamily.

It is found in the cell membrane. The catalysed reaction is a 1,2-diacyl-3-O-(beta-D-glucopyranosyl)-sn-glycerol + UDP-alpha-D-glucose = a 1,2-diacyl-3-O-(beta-D-Glc-(1-&gt;6)-beta-D-Glc)-sn-glycerol + UDP + H(+). The enzyme catalyses a 1,2-diacyl-3-O-(beta-D-Glc-(1-&gt;6)-beta-D-Glc)-sn-glycerol + UDP-alpha-D-glucose = a 1,2-diacyl-3-O-(beta-D-Glc-(1-&gt;6)-beta-D-Glc-(1-&gt;6)-beta-D-Glc)-sn-glycerol + UDP + H(+). It catalyses the reaction a 1,2-diacyl-sn-glycerol + UDP-alpha-D-glucose = a 1,2-diacyl-3-O-(beta-D-glucopyranosyl)-sn-glycerol + UDP + H(+). The protein operates within glycolipid metabolism; diglucosyl-diacylglycerol biosynthesis. Processive glucosyltransferase involved in the biosynthesis of both the bilayer- and non-bilayer-forming membrane glucolipids. Is able to successively transfer up to three glucosyl residues to diacylglycerol (DAG), thereby catalyzing the formation of beta-monoglucosyl-DAG (3-O-(beta-D-glucopyranosyl)-1,2-diacyl-sn-glycerol), beta-diglucosyl-DAG (3-O-(beta-D-glucopyranosyl-beta-(1-&gt;6)-D-glucopyranosyl)-1,2-diacyl-sn-glycerol) and beta-triglucosyl-DAG (3-O-(beta-D-glucopyranosyl-beta-(1-&gt;6)-D-glucopyranosyl-beta-(1-&gt;6)-D-glucopyranosyl)-1,2-diacyl-sn-glycerol). Beta-diglucosyl-DAG is the predominant glycolipid found in Bacillales and is also used as a membrane anchor for lipoteichoic acid (LTA). The protein is Processive diacylglycerol beta-glucosyltransferase of Bacillus cereus (strain AH187).